We begin with the raw amino-acid sequence, 179 residues long: Interleukin-22b (179 aa).

Residues 1–33 (MAVLQKSMSFSLMGTLAASCLLLIALWAQEANA) form the signal peptide. 2 cysteine pairs are disulfide-bonded: Cys40–Cys132 and Cys89–Cys178. Residues Asn54, Asn68, and Asn97 are each glycosylated (N-linked (GlcNAc...) asparagine).

It belongs to the IL-10 family.

The protein resides in the secreted. Functionally, cytokine that contributes to the inflammatory response in vivo. This Mus musculus (Mouse) protein is Interleukin-22b.